The chain runs to 585 residues: Putative phospholipase B-like 2 (585 aa).

The first 35 residues, 1-35, serve as a signal peptide directing secretion; that stretch reads MAAPMDRTHGGRAARALRRALALASLAGLLLSGLA. N-linked (GlcNAc...) asparagine glycans are attached at residues Asn-84, Asn-102, and Asn-106. A disulfide bridge links Cys-138 with Cys-148. Residues Asn-227 and Asn-432 are each glycosylated (N-linked (GlcNAc...) asparagine). Cysteines 488 and 491 form a disulfide. A glycan (N-linked (GlcNAc...) asparagine) is linked at Asn-511.

It belongs to the phospholipase B-like family. As to quaternary structure, interacts with IGF2R. In terms of processing, glycosylated; contains mannose 6-phosphate sugars.

It is found in the lysosome lumen. Functionally, putative phospholipase. In Rattus norvegicus (Rat), this protein is Putative phospholipase B-like 2 (Plbd2).